We begin with the raw amino-acid sequence, 407 residues long: Probable tRNA sulfurtransferase (407 aa).

Positions 61–165 (NEIIQRLSKV…MDAIYIYEKV (105 aa)) constitute a THUMP domain. Residues 183-184 (ML), 208-209 (HF), Arg-265, Gly-287, and Gln-296 each bind ATP.

This sequence belongs to the ThiI family.

The protein localises to the cytoplasm. It carries out the reaction [ThiI sulfur-carrier protein]-S-sulfanyl-L-cysteine + a uridine in tRNA + 2 reduced [2Fe-2S]-[ferredoxin] + ATP + H(+) = [ThiI sulfur-carrier protein]-L-cysteine + a 4-thiouridine in tRNA + 2 oxidized [2Fe-2S]-[ferredoxin] + AMP + diphosphate. It catalyses the reaction [ThiS sulfur-carrier protein]-C-terminal Gly-Gly-AMP + S-sulfanyl-L-cysteinyl-[cysteine desulfurase] + AH2 = [ThiS sulfur-carrier protein]-C-terminal-Gly-aminoethanethioate + L-cysteinyl-[cysteine desulfurase] + A + AMP + 2 H(+). It participates in cofactor biosynthesis; thiamine diphosphate biosynthesis. Catalyzes the ATP-dependent transfer of a sulfur to tRNA to produce 4-thiouridine in position 8 of tRNAs, which functions as a near-UV photosensor. Also catalyzes the transfer of sulfur to the sulfur carrier protein ThiS, forming ThiS-thiocarboxylate. This is a step in the synthesis of thiazole, in the thiamine biosynthesis pathway. The sulfur is donated as persulfide by IscS. This chain is Probable tRNA sulfurtransferase, found in Staphylococcus epidermidis (strain ATCC 35984 / DSM 28319 / BCRC 17069 / CCUG 31568 / BM 3577 / RP62A).